Here is a 208-residue protein sequence, read N- to C-terminus: Glutathione S-transferase 1 (208 aa).

The region spanning 1 to 80 (MDFYYLPGSA…YLVEKYGKTD (80 aa)) is the GST N-terminal domain. Residues Ser-9, 50–52 (HTI), and 64–66 (ESR) each bind glutathione. One can recognise a GST C-terminal domain in the interval 86-207 (CPKKRAVINQ…AGCLEFKKYF (122 aa)).

Belongs to the GST superfamily. Theta family. Homodimer.

It carries out the reaction RX + glutathione = an S-substituted glutathione + a halide anion + H(+). Functionally, conjugation of reduced glutathione to a wide number of exogenous and endogenous hydrophobic electrophiles. This Musca domestica (House fly) protein is Glutathione S-transferase 1 (Gst1).